We begin with the raw amino-acid sequence, 1946 residues long: Chromodomain-helicase-DNA-binding protein 5 (1946 aa).

3 disordered regions span residues 1-140 (MRGP…SGQL), 236-272 (VPQT…GRGK), and 285-340 (SKRK…GDGY). Composition is skewed to acidic residues over residues 17 to 37 (EEME…EGFE) and 72 to 90 (NDEM…ESEG). Basic residues-rich tracts occupy residues 96–118 (TKKK…KRKK) and 254–272 (GVRK…GRGK). Acidic residues predominate over residues 293 to 303 (SEEDEREDSDL). A compositionally biased stretch (basic residues) spans 323-332 (KKNKRRRKKK). 2 consecutive PHD-type zinc fingers follow at residues 345–392 (QDYC…CEKE) and 418–465 (MEFC…CTCP). A histone-binding region spans residues 345–655 (QDYCEVCQQG…HRELMLGEDA (311 aa)). One can recognise a Chromo 1 domain in the interval 499–556 (MPPPRPLEGIPEREFFVKWAGLSYWHCSWVKELQLELYHTVMYRNYQRKNDMDEPPPF). A disordered region spans residues 551–573 (DEPPPFDYGSGDEDGKSEKRKNK). Residues 563 to 573 (EDGKSEKRKNK) are compositionally biased toward basic and acidic residues. The region spanning 594–655 (MMVHRILNHS…HRELMLGEDA (62 aa)) is the Chromo 2 domain. The Helicase ATP-binding domain occupies 714–898 (RFSWAQGTDT…FHLLNFLTPE (185 aa)). 727–734 (DEMGLGKT) is a binding site for ATP. The short motif at 849-852 (DEAH) is the DEAH box element. Residues 1030–1195 (LLQKMLKKLR…MTKQELDDIL (166 aa)) form the Helicase C-terminal domain. Disordered stretches follow at residues 1210-1254 (MMSQ…VEDS), 1353-1413 (YNDA…LPPL), 1525-1566 (KYST…APLG), 1579-1696 (DEKE…EDKN), and 1926-1946 (SFPA…LQPF). Over residues 1212 to 1230 (SQGQRPTTPIPDIQSTKGG) the composition is skewed to polar residues. Composition is skewed to acidic residues over residues 1357–1368 (SQEDQEWQDELS) and 1378–1387 (SEDEDEDFEE). Gln-1392 carries the N5-methylglutamine modification. The span at 1551–1564 (TPVPASPAQLPPAP) shows a compositional bias: pro residues. Ser-1556 bears the Phosphoserine mark. Composition is skewed to basic and acidic residues over residues 1602 to 1629 (DRVE…EVEK), 1637 to 1654 (PLKE…DKPE), and 1661 to 1676 (GDFR…KEPG).

Belongs to the SNF2/RAD54 helicase family. As to quaternary structure, component of the nucleosome remodeling and deacetylase (NuRD) repressor complex, composed of core proteins MTA1, MTA2, MTA3, RBBP4, RBBP7, HDAC1, HDAC2, MBD2, MBD3, and peripherally associated proteins CDK2AP1, CDK2AP2, GATAD2A, GATAD2B, CHD3, CHD4 and CHD5. The exact stoichiometry of the NuRD complex is unknown, and some subunits such as MBD2 and MBD3, GATAD2A and GATAD2B, and CHD3, CHD4 and CHD5 define mutually exclusive NuRD complexes. Interacts with HDAC2. Methylated at Gln-1392 by N6AMT1. In terms of tissue distribution, specifically expressed by neurons in brain, retina and adrenal gland (at protein level). Also detected in testis.

The protein resides in the nucleus. It localises to the chromosome. It catalyses the reaction ATP + H2O = ADP + phosphate + H(+). ATP-dependent chromatin-remodeling factor that binds DNA through histones and regulates gene transcription. May specifically recognize and bind trimethylated 'Lys-27' (H3K27me3) and non-methylated 'Lys-4' of histone H3. Acts as a component of the histone deacetylase NuRD complex which participates in the remodeling of chromatin. Plays a role in the development of the nervous system by activating the expression of genes promoting neuron terminal differentiation. In parallel, it may also positively regulate the trimethylation of histone H3 at 'Lys-27' thereby specifically repressing genes that promote the differentiation into non-neuronal cell lineages. Regulates the expression of genes involved in cell proliferation and differentiation. Downstream activated genes may include CDKN2A that positively regulates the p53/TP53 pathway, which in turn, prevents cell proliferation. In spermatogenesis, it probably regulates histone hyperacetylation and the replacement of histones by transition proteins in chromatin, a crucial step in the condensation of spermatid chromatin and the production of functional spermatozoa. In Mus musculus (Mouse), this protein is Chromodomain-helicase-DNA-binding protein 5 (Chd5).